A 341-amino-acid polypeptide reads, in one-letter code: GTP-binding protein REM 2 (341 aa).

Acidic residues predominate over residues 1 to 13 (MHTDLDTDMDMDT). Disordered regions lie at residues 1 to 71 (MHTD…GSMP) and 84 to 106 (VDELDWPPQASPSGSSDSLGSGE). The span at 18–30 (LCSSSSRQASPLG) shows a compositional bias: polar residues. At Ser-27 the chain carries Phosphoserine. Low complexity predominate over residues 90-106 (PPQASPSGSSDSLGSGE). Residues 122-129 (GESGVGKS), 230-233 (NKSD), and 261-262 (AA) contribute to the GTP site. Residues 282 to 309 (RGRGHAGGQRPEPSSPDGPAPPTRRESL) form a disordered region. The span at 294-303 (PSSPDGPAPP) shows a compositional bias: pro residues. Ser-296 carries the post-translational modification Phosphoserine.

It belongs to the small GTPase superfamily. RGK family.

The protein localises to the cell membrane. Its function is as follows. Binds GTP saturably and exhibits a low intrinsic rate of GTP hydrolysis. The chain is GTP-binding protein REM 2 (Rem2) from Mus musculus (Mouse).